Reading from the N-terminus, the 414-residue chain is 2,3-diketo-5-methylthiopentyl-1-phosphate enolase (414 aa).

Lys-99 acts as the Proton acceptor in catalysis. Substrate-binding positions include Lys-148, 174-177 (KDDE), His-265, Gly-338, and 360-361 (GG). Positions 174, 176, and 177 each coordinate Mg(2+). At Lys-174 the chain carries N6-carboxylysine.

It belongs to the RuBisCO large chain family. Type IV subfamily. As to quaternary structure, homodimer. Mg(2+) serves as cofactor.

It carries out the reaction 5-methylsulfanyl-2,3-dioxopentyl phosphate = 2-hydroxy-5-methylsulfanyl-3-oxopent-1-enyl phosphate. It functions in the pathway amino-acid biosynthesis; L-methionine biosynthesis via salvage pathway; L-methionine from S-methyl-5-thio-alpha-D-ribose 1-phosphate: step 3/6. Its function is as follows. Catalyzes the enolization of 2,3-diketo-5-methylthiopentyl-1-phosphate (DK-MTP-1-P) into 2-hydroxy-3-keto-5-methylthiopentenyl-1-phosphate (HK-MTPenyl-1-P). In Bacillus anthracis (strain CDC 684 / NRRL 3495), this protein is 2,3-diketo-5-methylthiopentyl-1-phosphate enolase.